The following is a 479-amino-acid chain: G-rich sequence factor 1 (479 aa).

Residues 1 to 116 (MAGTRWVLGA…AAAAGPARGY (116 aa)) constitute a mitochondrion transit peptide. RRM domains are found at residues 149-245 (YLIR…PSPV) and 249-325 (GVVR…PSRR). Serine 243 is subject to Phosphoserine. Phosphoserine is present on serine 334. The RRM 3 domain occupies 400–479 (HFVHMRGLPF…LFLNSCPKGK (80 aa)).

As to quaternary structure, monomer. Found in a complex with DDX28, DHX30, FASTKD2 and FASTKD5. Interacts with the mitochondrial RNase P complex subunit TRMT10C/MRPP1. Interacts with the 2 components of the mitochondrial degradosome complex, PNPT1 and SUPV3L1, in an RNA-dependent manner.

It localises to the mitochondrion matrix. Regulator of post-transcriptional mitochondrial gene expression, required for assembly of the mitochondrial ribosome and for recruitment of mRNA and lncRNA. Binds RNAs containing the 14 base G-rich element. Preferentially binds RNAs transcribed from three contiguous genes on the light strand of mtDNA, the ND6 mRNA, and the long non-coding RNAs for MT-CYB and MT-ND5, each of which contains multiple consensus binding sequences. Involved in the degradosome-mediated decay of non-coding mitochondrial transcripts (MT-ncRNA) and tRNA-like molecules. Acts by unwinding G-quadruplex RNA structures in MT-ncRNA, thus facilitating their degradation by the degradosome. G-quadruplexes (G4) are non-canonical 4 stranded structures formed by transcripts from the light strand of mtDNA. This is G-rich sequence factor 1 (Grsf1) from Mus musculus (Mouse).